Consider the following 760-residue polypeptide: Xaa-Pro dipeptidyl-peptidase (760 aa).

Active-site charge relay system residues include Ser-349, Asp-469, and His-499.

This sequence belongs to the peptidase S15 family. As to quaternary structure, homodimer.

The protein resides in the cytoplasm. It carries out the reaction Hydrolyzes Xaa-Pro-|- bonds to release unblocked, N-terminal dipeptides from substrates including Ala-Pro-|-p-nitroanilide and (sequentially) Tyr-Pro-|-Phe-Pro-|-Gly-Pro-|-Ile.. Functionally, removes N-terminal dipeptides sequentially from polypeptides having unsubstituted N-termini provided that the penultimate residue is proline. In Streptococcus pyogenes serotype M2 (strain MGAS10270), this protein is Xaa-Pro dipeptidyl-peptidase.